We begin with the raw amino-acid sequence, 376 residues long: Succinyl-diaminopimelate desuccinylase (376 aa).

His-66 lines the Zn(2+) pocket. Asp-68 is an active-site residue. A Zn(2+)-binding site is contributed by Asp-99. Glu-133 (proton acceptor) is an active-site residue. Zn(2+)-binding residues include Glu-134, Glu-162, and His-348.

It belongs to the peptidase M20A family. DapE subfamily. Homodimer. The cofactor is Zn(2+). Co(2+) serves as cofactor.

It carries out the reaction N-succinyl-(2S,6S)-2,6-diaminopimelate + H2O = (2S,6S)-2,6-diaminopimelate + succinate. It participates in amino-acid biosynthesis; L-lysine biosynthesis via DAP pathway; LL-2,6-diaminopimelate from (S)-tetrahydrodipicolinate (succinylase route): step 3/3. Its function is as follows. Catalyzes the hydrolysis of N-succinyl-L,L-diaminopimelic acid (SDAP), forming succinate and LL-2,6-diaminopimelate (DAP), an intermediate involved in the bacterial biosynthesis of lysine and meso-diaminopimelic acid, an essential component of bacterial cell walls. In Thioalkalivibrio sulfidiphilus (strain HL-EbGR7), this protein is Succinyl-diaminopimelate desuccinylase.